Reading from the N-terminus, the 168-residue chain is Type-2 ice-structuring protein (168 aa).

Residues 1–17 (MLTVSLLVCAMMALTQA) form the signal peptide. The propeptide occupies 18–34 (DHDGVLKGTATEAGEVS). 5 disulfides stabilise this stretch: C45/C56, C73/C163, C107/C138, C127/C149, and C139/C155. The region spanning 52–164 (HGQRCFYSEA…CPASHASICA (113 aa)) is the C-type lectin domain.

The protein resides in the secreted. Its function is as follows. Has antifreeze activity to protect fish blood from freezing at subzero sea water temperatures. Binds to ice crystals and inhibits their growth. The thermal hysteresis (TH) activity, the ability to lower the blood freezing point, is approximately 0.45 degrees Celsius at 0.15 mM for this protein. The sequence is that of Type-2 ice-structuring protein from Brachyopsis segaliensis (Sea poacher).